The sequence spans 1037 residues: Outer dynein arm-docking complex subunit 2 (1037 aa).

2 stretches are compositionally biased toward basic and acidic residues: residues 316–334 and 376–391; these read EEQQKDNQIFEKPKTEDGH and SSIKDSQEEKQGKLEK. 2 disordered regions span residues 316-353 and 376-439; these read EEQQKDNQIFEKPKTEDGHSSVAGSEKSKIEKISFGKS and SSIK…ANAD. ARM repeat units follow at residues 477–516, 518–557, 528–570, 615–654, 656–695, 739–778, 821–860, 864–903, 905–944, and 946–985; these read ETCQLAIRDVGGLEVLINLLDTDEVKCKIGSLKILKEISH, PQIRRNIVDLGGLPIMVNILDSPHKSLKCLSAETIANVAK, GGLP…QHGG, HSNKEAIRKAGGIPLLARLLKTSHENMLIPVVGTLQECAS, ENYRAAIKAERIIENLVKNLNSENEQLQEHCAMAIYQCAE, KENVIKFREYKAIETLVGLLTDQPEEVLVNVVGALGECCQ, PESMAIIDRLDGVRLLWSLLKNPHPDVKASAAWALCPCIE, DAGEMVRSFVGGLELVVNLLKSDNKEVLASVCAAITNIAK, QENLAVITDHGVVPLLSKLANTNNDKLRRHLAEAISRCCM, and GRNRVAFGEHKAVAPLVRYLKSNDTNVHRATAQALYQLSE. The residue at position 545 (Lys545) is an N6-methyllysine.

In terms of assembly, component of the outer dynein arm-docking complex along with ODAD1, ODAD3, and ODAD4. Interacts with CFAP61. In terms of tissue distribution, highly expressed in testis. In males, also detected at lower levels in lung, brain, liver and muscle. In females, detected in ovary.

It localises to the cytoplasm. Its subcellular location is the cytoskeleton. It is found in the cilium axoneme. The protein resides in the cilium basal body. Functionally, component of the outer dynein arm-docking complex (ODA-DC) that mediates outer dynein arms (ODA) binding onto the doublet microtubule. Involved in mediating assembly of both ODAs and their axonemal docking complex onto ciliary microtubules. The sequence is that of Outer dynein arm-docking complex subunit 2 from Mus musculus (Mouse).